Consider the following 711-residue polypeptide: RB-associated KRAB zinc finger protein (711 aa).

The 72-residue stretch at 8–79 (LSFKDVAVAF…EGDRHAQRHL (72 aa)) folds into the KRAB domain. Residues K97 and K256 each participate in a glycyl lysine isopeptide (Lys-Gly) (interchain with G-Cter in SUMO2) cross-link. The tract at residues 170–257 (AYGESLEDFN…YPRSQMELKP (88 aa)) is required for interaction with RB1. 2 C2H2-type zinc fingers span residues 258–280 (FECT…QRAH) and 286–308 (YACS…RRSH). Residue K312 forms a Glycyl lysine isopeptide (Lys-Gly) (interchain with G-Cter in SUMO2) linkage. C2H2-type zinc fingers lie at residues 314 to 336 (YKCN…QRTH), 342 to 364 (YECS…QRNH), 370 to 392 (YPCN…QRTH), 398 to 420 (YKCN…QRTH), 426 to 448 (YQCS…YRSH), and 454 to 476 (YECT…WKVH). A Glycyl lysine isopeptide (Lys-Gly) (interchain with G-Cter in SUMO2) cross-link involves residue K354. The interval 414–711 (ITHQRTHTGE…TVNVLTVEKL (298 aa)) is interaction with AR. The C2H2-type 9; degenerate zinc finger occupies 508-530 (YECNECGKTFLDSSAFHRHQSVP). A Glycyl lysine isopeptide (Lys-Gly) (interchain with G-Cter in SUMO2) cross-link involves residue K534. 6 C2H2-type zinc fingers span residues 536 to 558 (YECN…YRGH), 564 to 586 (FGCS…QRVH), 592 to 614 (YECY…HRIH), 620 to 642 (YECS…YRSH), 648 to 670 (YECN…YRTH), and 676 to 698 (YECN…QRIH).

Belongs to the krueppel C2H2-type zinc-finger protein family. In terms of assembly, interacts with AR. May also interact with other nuclear hormone receptors such as NR3C1/GR. Interacts with RB1.

The protein resides in the nucleus. Its function is as follows. May repress E2F-dependent transcription. May promote AR-dependent transcription. The chain is RB-associated KRAB zinc finger protein (Rbak) from Mus musculus (Mouse).